The chain runs to 221 residues: Ribonuclease T (221 aa).

The 177-residue stretch at 20–196 (VVVDLETGGF…YDTERTAELF (177 aa)) folds into the Exonuclease domain. D23, E25, H183, and D188 together coordinate Mg(2+). H183 (proton donor/acceptor) is an active-site residue.

It belongs to the RNase T family. Homodimer. Requires Mg(2+) as cofactor.

Its function is as follows. Trims short 3' overhangs of a variety of RNA species, leaving a one or two nucleotide 3' overhang. Responsible for the end-turnover of tRNA: specifically removes the terminal AMP residue from uncharged tRNA (tRNA-C-C-A). Also appears to be involved in tRNA biosynthesis. This is Ribonuclease T from Chromohalobacter salexigens (strain ATCC BAA-138 / DSM 3043 / CIP 106854 / NCIMB 13768 / 1H11).